The primary structure comprises 164 residues: Cell division protein SepF (164 aa).

Residues 21–71 form a disordered region; it reads YQQGQQPAQQQQSPVQAVPTPVPAPQQQAKRAPVTPLHKPSTTTRNAAPAE. Positions 22-49 are enriched in low complexity; sequence QQGQQPAQQQQSPVQAVPTPVPAPQQQA.

The protein belongs to the SepF family. As to quaternary structure, homodimer. Interacts with FtsZ.

The protein resides in the cytoplasm. Functionally, cell division protein that is part of the divisome complex and is recruited early to the Z-ring. Probably stimulates Z-ring formation, perhaps through the cross-linking of FtsZ protofilaments. Its function overlaps with FtsA. The polypeptide is Cell division protein SepF (Clavibacter sepedonicus (Clavibacter michiganensis subsp. sepedonicus)).